A 655-amino-acid polypeptide reads, in one-letter code: Broad substrate specificity ATP-binding cassette transporter ABCG2 (655 aa).

At 1–395 (MSSNSYEVSI…KNLLGNPQAS (395 aa)) the chain is on the cytoplasmic side. The ABC transporter domain maps to 36 to 285 (LSFHNICYRV…FGAIGFRCEP (250 aa)). ATP is bound by residues 79-86 (GPTGGGKS), 183-189 (RGVSGGE), glutamate 210, and histidine 242. The 263-residue stretch at 389–651 (LGNPQASIAQ…TIAYLKLLFL (263 aa)) folds into the ABC transmembrane type-2 domain. Residues 396 to 416 (IAQLIVTVFLGLVIGAIFYDL) traverse the membrane as a helical segment. The Extracellular segment spans residues 417–428 (KNDPAGIQNRAG). The chain crosses the membrane as a helical span at residues 429 to 449 (VLFFLTTNQCFSSVSAVELLV). Residues 450-477 (VEKKLFIHEYISGYYRVSSYFFGKLLSD) are Cytoplasmic-facing. Residues 478 to 498 (LLPMRMLPSIIFTCITYFLLG) form a helical membrane-spanning segment. Over 499-506 (LKPKVEAF) the chain is Extracellular. A helical transmembrane segment spans residues 507-527 (FIMMLTLMMVAYSASSMALAI). Residues 528-535 (AAGQSVVS) lie on the Cytoplasmic side of the membrane. The helical transmembrane segment at 536–556 (IATLLMTISFVFMMIFSGLLV) threads the bilayer. Residues 557–630 (NLKTVVPWLS…ISPWGLWKNH (74 aa)) lie on the Extracellular side of the membrane. A disulfide bond links cysteine 592 and cysteine 608. Residues asparagine 596 and asparagine 600 are each glycosylated (N-linked (GlcNAc...) asparagine). Residues 631-651 (VALACMIVIFLTIAYLKLLFL) form a helical membrane-spanning segment. The Cytoplasmic segment spans residues 652–655 (KKFS).

It belongs to the ABC transporter superfamily. ABCG family. Eye pigment precursor importer (TC 3.A.1.204) subfamily. In terms of assembly, homodimer; disulfide-linked. The minimal functional unit is a homodimer, but the major oligomeric form in plasma membrane is a homotetramer with possibility of higher order oligomerization up to homododecamers. In terms of processing, N-glycosylated. Glycosylation-deficient ABCG2 is normally expressed and functional. Post-translationally, phosphorylated. Phosphorylation may regulate the localization to the plasma membrane, the homooligomerization and therefore, the activity of the transporter.

The protein resides in the cell membrane. It is found in the apical cell membrane. The protein localises to the mitochondrion membrane. It catalyses the reaction ATP + H2O + xenobioticSide 1 = ADP + phosphate + xenobioticSide 2.. The catalysed reaction is urate(in) + ATP + H2O = urate(out) + ADP + phosphate + H(+). The enzyme catalyses indoxyl sulfate(in) + ATP + H2O = indoxyl sulfate(out) + ADP + phosphate + H(+). It carries out the reaction sphing-4-enine 1-phosphate(in) + ATP + H2O = sphing-4-enine 1-phosphate(out) + ADP + phosphate + H(+). It catalyses the reaction estrone 3-sulfate(in) + ATP + H2O = estrone 3-sulfate(out) + ADP + phosphate + H(+). The catalysed reaction is dehydroepiandrosterone 3-sulfate(in) + ATP + H2O = dehydroepiandrosterone 3-sulfate(out) + ADP + phosphate + H(+). The enzyme catalyses 4-methylumbelliferone sulfate(in) + ATP + H2O = 4-methylumbelliferone sulfate(out) + ADP + phosphate + H(+). It carries out the reaction 5,7-dimethyl-2-methylamino-4-(3-pyridylmethyl)-1,3-benzothiazol-6-yl beta-D-glucuronate(in) + ATP + H2O = 5,7-dimethyl-2-methylamino-4-(3-pyridylmethyl)-1,3-benzothiazol-6-yl beta-D-glucuronate(out) + ADP + phosphate + H(+). It catalyses the reaction 4-methylumbelliferone beta-D-glucuronate(in) + ATP + H2O = 4-methylumbelliferone beta-D-glucuronate(out) + ADP + phosphate + H(+). The catalysed reaction is 5,7-dimethyl-2-methylamino-4-(3-pyridylmethyl)-1,3-benzothiazol-6-yl sulfate(in) + ATP + H2O = 5,7-dimethyl-2-methylamino-4-(3-pyridylmethyl)-1,3-benzothiazol-6-yl sulfate(out) + ADP + phosphate + H(+). The enzyme catalyses 17beta-estradiol 17-O-(beta-D-glucuronate)(in) + ATP + H2O = 17beta-estradiol 17-O-(beta-D-glucuronate)(out) + ADP + phosphate + H(+). It carries out the reaction methotrexate(in) + ATP + H2O = methotrexate(out) + ADP + phosphate + H(+). It catalyses the reaction riboflavin(in) + ATP + H2O = riboflavin(out) + ADP + phosphate + H(+). The catalysed reaction is pheophorbide a(in) + ATP + H2O = pheophorbide a(out) + ADP + phosphate + H(+). The enzyme catalyses itaconate(in) + ATP + H2O = itaconate(out) + ADP + phosphate + H(+). In terms of biological role, broad substrate specificity ATP-dependent transporter of the ATP-binding cassette (ABC) family that actively extrudes a wide variety of physiological compounds, dietary toxins and xenobiotics from cells. Involved in porphyrin homeostasis, mediating the export of protoporphyrin IX (PPIX) from both mitochondria to cytosol and cytosol to extracellular space, it also functions in the cellular export of heme. Also mediates the efflux of sphingosine-1-P from cells. Acts as a urate exporter functioning in both renal and extrarenal urate excretion. In kidney, it also functions as a physiological exporter of the uremic toxin indoxyl sulfate. Also involved in the excretion of steroids like estrone 3-sulfate/E1S, 3beta-sulfooxy-androst-5-en-17-one/DHEAS, and other sulfate conjugates. Mediates the secretion of the riboflavin and biotin vitamins into milk. Extrudes pheophorbide a, a phototoxic porphyrin catabolite of chlorophyll, reducing its bioavailability. Plays an important role in the exclusion of xenobiotics from the brain. It confers to cells a resistance to multiple drugs and other xenobiotics including mitoxantrone, pheophorbide, camptothecin, methotrexate, azidothymidine, and the anthracyclines daunorubicin and doxorubicin, through the control of their efflux. In placenta, it limits the penetration of drugs from the maternal plasma into the fetus. May play a role in early stem cell self-renewal by blocking differentiation. In inflammatory macrophages, exports itaconate from the cytosol to the extracellular compartment and limits the activation of TFEB-dependent lysosome biogenesis involved in antibacterial innate immune response. This chain is Broad substrate specificity ATP-binding cassette transporter ABCG2 (ABCG2), found in Bos taurus (Bovine).